Reading from the N-terminus, the 249-residue chain is Homeobox protein TGIF2LX (249 aa).

2 disordered regions span residues 1–65 and 126–199; these read MEAA…GYSP and DPIV…PKKK. Residues 9–27 are compositionally biased toward basic and acidic residues; it reads AETRSRVEKDSRRAIKDSP. A compositionally biased stretch (polar residues) spans 28 to 46; that stretch reads AKTQSPAQDTSIMLRNNAD. Positions 55-118 form a DNA-binding region, homeobox; TALE-type; it reads EHKKKRKGYS…INARRRILPD (64 aa). A compositionally biased stretch (polar residues) spans 159–172; the sequence is DNVQSLPLRSSPKG.

Belongs to the TALE/TGIF homeobox family.

The protein resides in the nucleus. May have a transcription role in testis. This chain is Homeobox protein TGIF2LX (TGIF2LX), found in Macaca mulatta (Rhesus macaque).